Consider the following 334-residue polypeptide: D-fructose 1,6-bisphosphatase class 2/sedoheptulose 1,7-bisphosphatase (334 aa).

Aspartate 33, glutamate 57, aspartate 85, and glutamate 88 together coordinate Mn(2+). Residues 88-90, tyrosine 119, 164-166, and 186-188 contribute to the substrate site; these read EGT, RAR, and DGD. Glutamate 213 provides a ligand contact to Mn(2+).

Belongs to the FBPase class 2 family. Homotetramer. Mn(2+) serves as cofactor.

The catalysed reaction is beta-D-fructose 1,6-bisphosphate + H2O = beta-D-fructose 6-phosphate + phosphate. It catalyses the reaction D-sedoheptulose 1,7-bisphosphate + H2O = D-sedoheptulose 7-phosphate + phosphate. The protein operates within carbohydrate biosynthesis; Calvin cycle. In terms of biological role, catalyzes the hydrolysis of fructose 1,6-bisphosphate (Fru 1,6-P2) and sedoheptulose 1,7-bisphosphate (Sed 1,7-P2) to fructose 6-phosphate and sedoheptulose 7-phosphate, respectively. The polypeptide is D-fructose 1,6-bisphosphatase class 2/sedoheptulose 1,7-bisphosphatase (Prochlorococcus marinus (strain MIT 9313)).